The sequence spans 348 residues: Protein-glutamate methylesterase/protein-glutamine glutaminase 5 (348 aa).

The Response regulatory domain maps to 8-125 (RVLVVDDSAF…TERLYELGGE (118 aa)). 4-aspartylphosphate is present on aspartate 59. The CheB-type methylesterase domain maps to 157-348 (RAAAKSLVVV…MLALLRRHVR (192 aa)). Active-site residues include serine 169, histidine 196, and aspartate 292.

It belongs to the CheB family. In terms of processing, phosphorylated by CheA. Phosphorylation of the N-terminal regulatory domain activates the methylesterase activity.

It localises to the cytoplasm. The catalysed reaction is [protein]-L-glutamate 5-O-methyl ester + H2O = L-glutamyl-[protein] + methanol + H(+). It carries out the reaction L-glutaminyl-[protein] + H2O = L-glutamyl-[protein] + NH4(+). Functionally, involved in chemotaxis. Part of a chemotaxis signal transduction system that modulates chemotaxis in response to various stimuli. Catalyzes the demethylation of specific methylglutamate residues introduced into the chemoreceptors (methyl-accepting chemotaxis proteins or MCP) by CheR. Also mediates the irreversible deamidation of specific glutamine residues to glutamic acid. The chain is Protein-glutamate methylesterase/protein-glutamine glutaminase 5 from Myxococcus xanthus (strain DK1622).